The sequence spans 692 residues: Catalase-B (692 aa).

Catalysis depends on residues H69 and N142. Residue Y356 coordinates heme.

This sequence belongs to the catalase family. Heme is required as a cofactor.

Its subcellular location is the cytoplasm. The enzyme catalyses 2 H2O2 = O2 + 2 H2O. Occurs in almost all aerobically respiring organisms and serves to protect cells from the toxic effects of hydrogen peroxide. Its accumulation in prespore cells affords the spores protection from oxidation during prolonged dormancy. Required for normal developmental timing, possibly through a regulatory role in differentiation and morphogenesis. This Dictyostelium discoideum (Social amoeba) protein is Catalase-B (catB).